A 171-amino-acid polypeptide reads, in one-letter code: Protein E8^E2C (171 aa).

Residues 15 to 54 are disordered; that stretch reads DQISTTETADPKTTEATNNESTQGTKRRRLDLPDSRDNTQ. The span at 28 to 38 shows a compositional bias: polar residues; that stretch reads TEATNNESTQG.

Belongs to the papillomaviridae E8^E2C protein family.

Its subcellular location is the host nucleus. Plays a role in limiting the replication of viral DNA in keratinocytes. Recruits the host NCoR/SMRT complex to viral replication foci to mediate repression of both viral replication and transcription. The chain is Protein E8^E2C from Homo sapiens (Human).